A 120-amino-acid polypeptide reads, in one-letter code: Glutamate--tRNA ligase (120 aa).

It belongs to the class-I aminoacyl-tRNA synthetase family. Glutamate--tRNA ligase type 1 subfamily. As to quaternary structure, monomer.

Its subcellular location is the cytoplasm. The enzyme catalyses tRNA(Glu) + L-glutamate + ATP = L-glutamyl-tRNA(Glu) + AMP + diphosphate. Its function is as follows. Catalyzes the attachment of glutamate to tRNA(Glu) in a two-step reaction: glutamate is first activated by ATP to form Glu-AMP and then transferred to the acceptor end of tRNA(Glu). The protein is Glutamate--tRNA ligase (gltX) of Staphylococcus xylosus.